The sequence spans 302 residues: Succinate--CoA ligase [ADP-forming] subunit alpha (302 aa).

CoA-binding positions include 17–20 (TGST), Lys-43, and 96–98 (ITE). Residue Tyr-159 coordinates substrate. His-247 functions as the Tele-phosphohistidine intermediate in the catalytic mechanism.

It belongs to the succinate/malate CoA ligase alpha subunit family. In terms of assembly, heterotetramer of two alpha and two beta subunits.

It catalyses the reaction succinate + ATP + CoA = succinyl-CoA + ADP + phosphate. The catalysed reaction is GTP + succinate + CoA = succinyl-CoA + GDP + phosphate. The protein operates within carbohydrate metabolism; tricarboxylic acid cycle; succinate from succinyl-CoA (ligase route): step 1/1. Functionally, succinyl-CoA synthetase functions in the citric acid cycle (TCA), coupling the hydrolysis of succinyl-CoA to the synthesis of either ATP or GTP and thus represents the only step of substrate-level phosphorylation in the TCA. The alpha subunit of the enzyme binds the substrates coenzyme A and phosphate, while succinate binding and nucleotide specificity is provided by the beta subunit. The polypeptide is Succinate--CoA ligase [ADP-forming] subunit alpha (Staphylococcus epidermidis (strain ATCC 12228 / FDA PCI 1200)).